Here is a 361-residue protein sequence, read N- to C-terminus: MVWALGLMSGTSLDGVDAALIETDGVRIGRIGPSLTVPYSPELRGRTRELLDRAAGLAPDDAEVLAVTRELTLRHVDAVRLLREKAPGLEPAVIGFHGQTILHQPERGRSWQIGDARLLQDLCGVPVVHDFRSRDLENGGEGAPLVPVFHAALLHQEVRPVAVLNIGGVANVTVLGQQEPNGQRGVWACDTGPGNALLDDWALQHTGQPCDFGGALAASGAVHQDVLERLLAIPYFARPMPKSLDRLSFHPEAMACVRDLSAADGAATLASFTVEAVAGTTFPVRPEGWFVAGGGRHNPVLMDGLNHRLGNVASVDVLGWDGDALEAQCFGLLAMRFLRGLPSSWPGTTGVRQPCIAGRAV.

10-17 serves as a coordination point for ATP; it reads GTSLDGVD.

Belongs to the anhydro-N-acetylmuramic acid kinase family.

The enzyme catalyses 1,6-anhydro-N-acetyl-beta-muramate + ATP + H2O = N-acetyl-D-muramate 6-phosphate + ADP + H(+). Its pathway is amino-sugar metabolism; 1,6-anhydro-N-acetylmuramate degradation. It participates in cell wall biogenesis; peptidoglycan recycling. In terms of biological role, catalyzes the specific phosphorylation of 1,6-anhydro-N-acetylmuramic acid (anhMurNAc) with the simultaneous cleavage of the 1,6-anhydro ring, generating MurNAc-6-P. Is required for the utilization of anhMurNAc either imported from the medium or derived from its own cell wall murein, and thus plays a role in cell wall recycling. In Gluconobacter oxydans (strain 621H) (Gluconobacter suboxydans), this protein is Anhydro-N-acetylmuramic acid kinase.